Consider the following 371-residue polypeptide: Heterodimeric geranylgeranyl pyrophosphate synthase large subunit 1, chloroplastic (371 aa).

The transit peptide at 1–51 directs the protein to the chloroplast; it reads MASVTLGSWIVVHHHNHHHPSSILTKSRSRSCPITLTKPISFRSKRTVSSS. Ser52 is subject to N-acetylserine. Lys116, Arg119, and His148 together coordinate isopentenyl diphosphate. Residues Asp155 and Asp161 each contribute to the Mg(2+) site. Residue Arg166 participates in dimethylallyl diphosphate binding. Isopentenyl diphosphate is bound at residue Arg167. Residues Lys256, Thr257, Gln294, Lys311, and Lys321 each coordinate dimethylallyl diphosphate.

The protein belongs to the FPP/GGPP synthase family. In terms of assembly, forms homodimers. Part of a heterodimeric geranyl(geranyl)diphosphate synthase. Interacts with GGR. The cofactor is Mg(2+). In terms of tissue distribution, expressed ubiquitously.

The protein localises to the plastid. Its subcellular location is the chloroplast. It is found in the cytoplasm. It catalyses the reaction isopentenyl diphosphate + dimethylallyl diphosphate = (2E)-geranyl diphosphate + diphosphate. The catalysed reaction is isopentenyl diphosphate + (2E)-geranyl diphosphate = (2E,6E)-farnesyl diphosphate + diphosphate. The enzyme catalyses isopentenyl diphosphate + (2E,6E)-farnesyl diphosphate = (2E,6E,10E)-geranylgeranyl diphosphate + diphosphate. The protein operates within isoprenoid biosynthesis; farnesyl diphosphate biosynthesis; farnesyl diphosphate from geranyl diphosphate and isopentenyl diphosphate: step 1/1. Its pathway is isoprenoid biosynthesis; geranyl diphosphate biosynthesis; geranyl diphosphate from dimethylallyl diphosphate and isopentenyl diphosphate: step 1/1. It participates in isoprenoid biosynthesis; geranylgeranyl diphosphate biosynthesis; geranylgeranyl diphosphate from farnesyl diphosphate and isopentenyl diphosphate: step 1/1. In terms of biological role, heterodimeric geranyl(geranyl)-diphosphate (GPP) synthase large subunit. In vitro, the large subunit catalyzes mainly the trans-addition of the three molecules of IPP onto DMAPP to form geranylgeranyl pyrophosphate while the small subunit alone is inactive. Upon association of the two subunits, the product profile changes and the production of gerany-diphosphate is strongly increased. This chain is Heterodimeric geranylgeranyl pyrophosphate synthase large subunit 1, chloroplastic (GGPPS1), found in Arabidopsis thaliana (Mouse-ear cress).